The chain runs to 95 residues: MAKTPENIAIDQLDKDQIKTFSDFLMSYNKLSETCFTDCIRDFTTRDVKDSEEKCSLNCMEKYLKMNQRVSQRFQEFQVIAHENALAMAQKTGKL.

Residues 35–59 (CFTDCIRDFTTRDVKDSEEKCSLNC) carry the Twin CX3C motif motif. Disulfide bonds link Cys35–Cys59 and Cys39–Cys55.

It belongs to the small Tim family. In terms of assembly, heterohexamer; composed of 3 copies of Tim9 and 3 copies of Tim10, named soluble 70 kDa complex. The complex associates with the Tim22 component of the TIM22 complex. Interacts with multi-pass transmembrane proteins in transit.

The protein resides in the mitochondrion inner membrane. Its function is as follows. Mitochondrial intermembrane chaperone that participates in the import and insertion of multi-pass transmembrane proteins into the mitochondrial inner membrane. May also be required for the transfer of beta-barrel precursors from the TOM complex to the sorting and assembly machinery (SAM complex) of the outer membrane. Acts as a chaperone-like protein that protects the hydrophobic precursors from aggregation and guide them through the mitochondrial intermembrane space. This chain is Mitochondrial import inner membrane translocase subunit Tim9 (Tim9a), found in Drosophila melanogaster (Fruit fly).